Reading from the N-terminus, the 335-residue chain is Cholinephosphotransferase 1 (335 aa).

2 helical membrane passes run 53–73 (PNAI…PLIA) and 84–108 (FWAY…GKQA). N54 serves as a coordination point for CDP-choline. Residues D101 and D104 each contribute to the Mg(2+) site. Residue R109 coordinates CDP-choline. Transmembrane regions (helical) follow at residues 116 to 140 (PLGE…SCIA), 151 to 169 (FFCC…WQTY), 181 to 197 (VTEV…VSAF), 213 to 238 (ELKF…RIIF), 267 to 276 (IGPGLLFLDQ), and 284 to 313 (EYVV…IAAH). D122 lines the Mg(2+) pocket. H123 (proton acceptor) is an active-site residue. D126 serves as a coordination point for Mg(2+).

The protein belongs to the CDP-alcohol phosphatidyltransferase class-I family. The cofactor is Mg(2+). Requires Mn(2+) as cofactor.

Its subcellular location is the golgi apparatus membrane. It carries out the reaction CDP-choline + a 1,2-diacyl-sn-glycerol = a 1,2-diacyl-sn-glycero-3-phosphocholine + CMP + H(+). The enzyme catalyses 1-octadecanoyl-2-(5Z,8Z,11Z,14Z-eicosatetraenoyl)-sn-glycerol + CDP-choline = 1-octadecanoyl-2-(5Z,8Z,11Z,14Z-eicosatetraenoyl)-sn-glycero-3-phosphocholine + CMP + H(+). The catalysed reaction is 1-hexadecanoyl-2-(9Z-octadecenoyl)-sn-glycerol + CDP-choline = 1-hexadecanoyl-2-(9Z-octadecenoyl)-sn-glycero-3-phosphocholine + CMP + H(+). It catalyses the reaction 1-hexadecanoyl-2-(4Z,7Z,10Z,13Z,16Z,19Z-docosahexaenoyl)-sn-glycerol + CDP-choline = 1-hexadecanoyl-2-(4Z,7Z,10Z,13Z,16Z,19Z-docosahexaenoyl)-sn-glycero-3-phosphocholine + CMP + H(+). It carries out the reaction 1,2-dioctanoyl-sn-glycerol + CDP-choline = 1,2-dioctanoyl-sn-glycero-3-phosphocholine + CMP + H(+). It functions in the pathway phospholipid metabolism; phosphatidylcholine biosynthesis; phosphatidylcholine from phosphocholine: step 2/2. Its function is as follows. Catalyzes the final step of de novo phosphatidylcholine (PC) synthesis, i.e. the transfer of choline phosphate from CDP-choline to the free hydroxyl of a diacylglycerol (DAG), producing a PC. It thereby plays a central role in the formation and maintenance of vesicular membranes. This is Cholinephosphotransferase 1 (CHPT1) from Gallus gallus (Chicken).